The following is a 303-amino-acid chain: MLDQISLEIPKGTIYGLVGHSGAGKSTLLRTINGLEGFDEGELWVDGVDLQSLQGDALRVFRKNIGMIFQHFSLMARQNVFENVALPLRCWKYPEAEIQKRVFNLLSLVGLESKSDSYPSALSGGQKQRVAIARALTLEPQILLSDEATSALDPSMTQSILDLLQTINQELGVTVVLVTHEMEVVKKLCHHAAFLEGGKLLRSGNIEELFLQPDPKMRHFLGESEVLPKEGVNIRLYFPKEVAQNPIITQMARQLSLDFSIVWGKLERFGEDVLGSLVINIPEARQEEAERFLESSGVRWEVL.

Positions 1–222 (MLDQISLEIP…PDPKMRHFLG (222 aa)) constitute an ABC transporter domain. An ATP-binding site is contributed by 19 to 26 (GHSGAGKS).

The protein belongs to the ABC transporter superfamily. Methionine importer (TC 3.A.1.24) family. The complex is composed of two ATP-binding proteins (MetN), two transmembrane proteins (MetI) and a solute-binding protein (MetQ).

Its subcellular location is the cell inner membrane. The enzyme catalyses L-methionine(out) + ATP + H2O = L-methionine(in) + ADP + phosphate + H(+). It carries out the reaction D-methionine(out) + ATP + H2O = D-methionine(in) + ADP + phosphate + H(+). Part of the ABC transporter complex MetNIQ involved in methionine import. Responsible for energy coupling to the transport system. The sequence is that of Methionine import ATP-binding protein MetN from Wolinella succinogenes (strain ATCC 29543 / DSM 1740 / CCUG 13145 / JCM 31913 / LMG 7466 / NCTC 11488 / FDC 602W) (Vibrio succinogenes).